The chain runs to 75 residues: ATP synthase subunit epsilon, mitochondrial (75 aa).

The transit peptide at 1–9 directs the protein to the mitochondrion; that stretch reads MIRRSCALL.

This sequence belongs to the eukaryotic ATPase epsilon family. In terms of assembly, F-type ATPases have 2 components, F(1) - the catalytic core - and F(o) - the membrane proton channel. F(1) has five subunits: alpha(3), beta(3), gamma(1), delta(1), epsilon(1), plus the additional subunit P18 (Tb427.05.1710) that is not present in F(1)F(o) ATP synthase from metazoa. Subunit P18 (Tb927.5.1710) interacts with the alpha subunit with a 1:1 stoichiometry; the interaction is direct. Subunit gamma is part of the central stalk. F(o) has three main subunits: a, b and c. The trypanosomal ATPase complex contains additional subunits that are not present in the F(1)F(o) ATP synthase from metazoa.

Its subcellular location is the mitochondrion. The protein resides in the mitochondrion inner membrane. In terms of biological role, mitochondrial membrane ATP synthase (F(1)F(o) ATP synthase) produces ATP from ADP in the presence of a proton gradient across the membrane which is generated by electron transport complexes of the respiratory chain. F-type ATPases consist of two structural domains, F(1) - containing the extramembraneous catalytic core, and F(o) - containing the membrane proton channel, linked together by a central stalk and a peripheral stalk. During catalysis, ATP synthesis in the catalytic domain of F(1) is coupled via a rotary mechanism of the central stalk subunits to proton translocation. Subunits alpha and beta form the catalytic core in F(1). Rotation of the central stalk against the surrounding alpha(3)beta(3) subunits leads to hydrolysis of ATP in three separate catalytic sites on the beta subunits. Contrary to the procyclic, insect form that requires F(1)F(o) ATP synthase for ATP synthesis, the bloodstream form relies on ATP hydrolysis by F(1)F(o) ATP synthase to maintain its mitochondrial membrane potential. The protein is ATP synthase subunit epsilon, mitochondrial of Trypanosoma brucei brucei.